The following is a 298-amino-acid chain: Inosose dehydratase (298 aa).

This sequence belongs to the IolE/MocC family. The cofactor is glutathione. Requires Co(2+) as cofactor. It depends on Mn(2+) as a cofactor.

The catalysed reaction is scyllo-inosose = 3D-3,5/4-trihydroxycyclohexane-1,2-dione + H2O. Functionally, catalyzes the dehydration of inosose (2-keto-myo-inositol, 2KMI or 2,4,6/3,5-pentahydroxycyclohexanone) to 3D-(3,5/4)-trihydroxycyclohexane-1,2-dione (D-2,3-diketo-4-deoxy-epi-inositol). This Histophilus somni (strain 129Pt) (Haemophilus somnus) protein is Inosose dehydratase.